The sequence spans 349 residues: 26S proteasome non-ATPase regulatory subunit 4 (349 aa).

Positions 5–188 (ATIVCLDNSE…LSDIILQSPI (184 aa)) constitute a VWFA domain. In terms of domain architecture, UIM 1 spans 204–223 (DTDPDLAMALKLSLEEEKQR). Positions 219–234 (EEKQRQERERKAREEA) are enriched in basic and acidic residues. 2 disordered regions span residues 219-257 (EEKQ…MDVN) and 274-349 (TDKM…NEKK). Over residues 235-253 (NGGSTNSGTTTTTAPTESN) the composition is skewed to low complexity. Residues 259–278 (EDDPELAEALALSMATDKME) form the UIM 2 domain. The segment covering 280-301 (QSSTTNTDSQPPQQQQQPPTDD) has biased composition (low complexity). The segment covering 335-349 (LSKKDEDKDKDNEKK) has biased composition (basic and acidic residues).

The protein belongs to the proteasome subunit S5A family. The 26S proteasome is composed of a core protease, known as the 20S proteasome, capped at one or both ends by the 19S regulatory complex (RC). The RC is composed of at least 18 different subunits in two subcomplexes, the base and the lid, which form the portions proximal and distal to the 20S proteolytic core, respectively.

In terms of biological role, binds and presumably selects ubiquitin-conjugates for destruction. The polypeptide is 26S proteasome non-ATPase regulatory subunit 4 (psmD4) (Dictyostelium discoideum (Social amoeba)).